A 197-amino-acid polypeptide reads, in one-letter code: Adenylyl-sulfate kinase (197 aa).

33 to 40 (GLSGSGKS) contacts ATP. The Phosphoserine intermediate role is filled by Ser-107.

The protein belongs to the APS kinase family.

It catalyses the reaction adenosine 5'-phosphosulfate + ATP = 3'-phosphoadenylyl sulfate + ADP + H(+). The protein operates within sulfur metabolism; hydrogen sulfide biosynthesis; sulfite from sulfate: step 2/3. Catalyzes the synthesis of activated sulfate. The protein is Adenylyl-sulfate kinase of Bacillus licheniformis (strain ATCC 14580 / DSM 13 / JCM 2505 / CCUG 7422 / NBRC 12200 / NCIMB 9375 / NCTC 10341 / NRRL NRS-1264 / Gibson 46).